Reading from the N-terminus, the 154-residue chain is 6,7-dimethyl-8-ribityllumazine synthase (154 aa).

5-amino-6-(D-ribitylamino)uracil contacts are provided by residues Phe21, 55–57 (AFE), and 79–81 (CVI). 84–85 (AT) lines the (2S)-2-hydroxy-3-oxobutyl phosphate pocket. His87 (proton donor) is an active-site residue. A 5-amino-6-(D-ribitylamino)uracil-binding site is contributed by Phe112. Residue Arg126 participates in (2S)-2-hydroxy-3-oxobutyl phosphate binding.

The protein belongs to the DMRL synthase family. Forms an icosahedral capsid composed of 60 subunits, arranged as a dodecamer of pentamers.

The enzyme catalyses (2S)-2-hydroxy-3-oxobutyl phosphate + 5-amino-6-(D-ribitylamino)uracil = 6,7-dimethyl-8-(1-D-ribityl)lumazine + phosphate + 2 H2O + H(+). It participates in cofactor biosynthesis; riboflavin biosynthesis; riboflavin from 2-hydroxy-3-oxobutyl phosphate and 5-amino-6-(D-ribitylamino)uracil: step 1/2. Functionally, catalyzes the formation of 6,7-dimethyl-8-ribityllumazine by condensation of 5-amino-6-(D-ribitylamino)uracil with 3,4-dihydroxy-2-butanone 4-phosphate. This is the penultimate step in the biosynthesis of riboflavin. This chain is 6,7-dimethyl-8-ribityllumazine synthase, found in Staphylococcus aureus (strain Mu50 / ATCC 700699).